The sequence spans 588 residues: Calicin (588 aa).

The BTB domain maps to 28 to 98 (WDIALTVDHH…FYSGKVVISE (71 aa)). Phosphoserine is present on Ser149. 6 Kelch repeats span residues 280–327 (SVVI…SAGR), 328–375 (YIYI…TCGG), 377–423 (VYSV…TRGD), 425–475 (NLYI…SFHQ), 476–525 (DNIL…VGDN), and 526–580 (KVFV…LAKL).

In terms of assembly, interacts with CYLC1; the interaction may be relevant for proper acrosome attachment to the nuclear envelope. In terms of tissue distribution, expressed in testis and in spermatozoa (at protein level).

It localises to the cytoplasm. It is found in the cytoskeleton. The protein resides in the perinuclear theca. Its subcellular location is the calyx. Its function is as follows. Required for both nuclear and acrosomal shaping during spermiogenesis. The protein is Calicin (CCIN) of Bos taurus (Bovine).